The chain runs to 765 residues: Polyribonucleotide nucleotidyltransferase (765 aa).

Asp556 and Asp562 together coordinate Mg(2+). The KH domain maps to Pro622 to Ile681. In terms of domain architecture, S1 motif spans Gly693–Val762.

It belongs to the polyribonucleotide nucleotidyltransferase family. The cofactor is Mg(2+).

It localises to the cytoplasm. It catalyses the reaction RNA(n+1) + phosphate = RNA(n) + a ribonucleoside 5'-diphosphate. Involved in mRNA degradation. Catalyzes the phosphorolysis of single-stranded polyribonucleotides processively in the 3'- to 5'-direction. This Corynebacterium urealyticum (strain ATCC 43042 / DSM 7109) protein is Polyribonucleotide nucleotidyltransferase.